Reading from the N-terminus, the 578-residue chain is MKDTIRQLIQQAITQLVTEGVLPEGLTPAIQVENTRDKTHGDFASNIAMMLAKPAGMKPRDLAEKIIAALPAHEDLSKAEIAGPGFINFFQNTQALAARLDAALGDDHLGVRKAGPAQRTVIDMSAPNLAKEMHVGHLRSTIIGDGVARVLEFLGDTVIRQNHVGDWGTQFGMLMAYLEENPITSDELSDLENFYRAAKQRFDESEAFADRARGLVVKLQAGDPDCLELWTKFKDISLSHCQKIYELLNVKLTMADVMGESAYNDDLINVVNDLKAQGLLVESNGAQCVFLDEFKNAEGEPLPVIIVKADGGYLYATTDLAAVRYRSGKLKADRALYFVDQRQALHFQQVFAVARKAGFVTHPMEMEHMGFGTMNGADGRPFKTRDGGTVKLIDLLTEAEERAYALVKEKNPQLPEADLRSIAKVVGIDSVKYADLSKHRTSDYSFNFDLMLNFEGNTAPYLLYAYTRAAGVFRKLGKDFSEVGGQIELHAAQELELAAKLAQFGEILNNVAEKGTPHILCTYLYDVAGLFSSFYENCPILAAETPTQMHSRLRLTELTRRTLKQGLELLGLKVLEQM.

Positions 127 to 137 (PNLAKEMHVGH) match the 'HIGH' region motif.

The protein belongs to the class-I aminoacyl-tRNA synthetase family. As to quaternary structure, monomer.

It localises to the cytoplasm. It catalyses the reaction tRNA(Arg) + L-arginine + ATP = L-arginyl-tRNA(Arg) + AMP + diphosphate. This is Arginine--tRNA ligase from Pseudomonas fluorescens (strain ATCC BAA-477 / NRRL B-23932 / Pf-5).